The primary structure comprises 323 residues: DNA primase small subunit PriS (323 aa).

Residues aspartate 97, aspartate 99, and aspartate 274 contribute to the active site.

This sequence belongs to the eukaryotic-type primase small subunit family. As to quaternary structure, heterodimer of a small subunit (PriS) and a large subunit (PriL). Mg(2+) is required as a cofactor. Mn(2+) serves as cofactor.

Its function is as follows. Catalytic subunit of DNA primase, an RNA polymerase that catalyzes the synthesis of short RNA molecules used as primers for DNA polymerase during DNA replication. The small subunit contains the primase catalytic core and has DNA synthesis activity on its own. Binding to the large subunit stabilizes and modulates the activity, increasing the rate of DNA synthesis while decreasing the length of the DNA fragments, and conferring RNA synthesis capability. The DNA polymerase activity may enable DNA primase to also catalyze primer extension after primer synthesis. May also play a role in DNA repair. The protein is DNA primase small subunit PriS of Methanothermobacter thermautotrophicus (strain ATCC 29096 / DSM 1053 / JCM 10044 / NBRC 100330 / Delta H) (Methanobacterium thermoautotrophicum).